The chain runs to 71 residues: uncharacterized protein (71 aa).

The protein localises to the plastid. Its subcellular location is the chloroplast. This is an uncharacterized protein from Mesostigma viride (Green alga).